Consider the following 464-residue polypeptide: 3-isopropylmalate dehydratase large subunit (464 aa).

Positions 337, 397, and 400 each coordinate [4Fe-4S] cluster.

The protein belongs to the aconitase/IPM isomerase family. LeuC type 1 subfamily. Heterodimer of LeuC and LeuD. [4Fe-4S] cluster is required as a cofactor.

It catalyses the reaction (2R,3S)-3-isopropylmalate = (2S)-2-isopropylmalate. It functions in the pathway amino-acid biosynthesis; L-leucine biosynthesis; L-leucine from 3-methyl-2-oxobutanoate: step 2/4. Catalyzes the isomerization between 2-isopropylmalate and 3-isopropylmalate, via the formation of 2-isopropylmaleate. The polypeptide is 3-isopropylmalate dehydratase large subunit (Bacillus thuringiensis (strain Al Hakam)).